Reading from the N-terminus, the 96-residue chain is Co-chaperonin GroES (96 aa).

Belongs to the GroES chaperonin family. Heptamer of 7 subunits arranged in a ring. Interacts with the chaperonin GroEL.

The protein resides in the cytoplasm. Functionally, together with the chaperonin GroEL, plays an essential role in assisting protein folding. The GroEL-GroES system forms a nano-cage that allows encapsulation of the non-native substrate proteins and provides a physical environment optimized to promote and accelerate protein folding. GroES binds to the apical surface of the GroEL ring, thereby capping the opening of the GroEL channel. This Alcanivorax borkumensis (strain ATCC 700651 / DSM 11573 / NCIMB 13689 / SK2) protein is Co-chaperonin GroES.